Reading from the N-terminus, the 422-residue chain is Enolase (422 aa).

(2R)-2-phosphoglycerate is bound at residue Gln-162. Glu-204 functions as the Proton donor in the catalytic mechanism. 3 residues coordinate Mg(2+): Asp-241, Glu-284, and Asp-311. (2R)-2-phosphoglycerate-binding residues include Lys-336, Arg-365, Ser-366, and Lys-387. Lys-336 acts as the Proton acceptor in catalysis.

It belongs to the enolase family. As to quaternary structure, component of the RNA degradosome, a multiprotein complex involved in RNA processing and mRNA degradation. Requires Mg(2+) as cofactor.

The protein localises to the cytoplasm. The protein resides in the secreted. It localises to the cell surface. The enzyme catalyses (2R)-2-phosphoglycerate = phosphoenolpyruvate + H2O. Its pathway is carbohydrate degradation; glycolysis; pyruvate from D-glyceraldehyde 3-phosphate: step 4/5. Its function is as follows. Catalyzes the reversible conversion of 2-phosphoglycerate (2-PG) into phosphoenolpyruvate (PEP). It is essential for the degradation of carbohydrates via glycolysis. This chain is Enolase, found in Legionella pneumophila (strain Corby).